Here is a 301-residue protein sequence, read N- to C-terminus: MLKSSKKEDDSKKNHDNKSIFHLRKLFSPIKSLFSNKVPDDFFSVIKRLKTNSQKMTLDERNILANLLKLKGKTIEDIMVPRSDIAAIKLTTNIEELNESIKVKIPHTRTLIYDGTLDNIVGFIHIKDLFKALVTKQNFRLKKLIRKHIIAAPSMKLLDLLAKMRREKTHIAIVIDEYGGTDGLVTIEDVMEALVGRIDDEHDQKSEYDNYKVINNSTIISNARVEVEVLEEIIGEKLKDDDDEFDTISGLVLTKMGNVPAVGTKINVSENIEIEVTDANPRSLKQVKITLKNSLKRAKSS.

2 CBS domains span residues 79 to 141 (MVPR…NFRL) and 144 to 201 (LIRK…IDDE).

This sequence belongs to the UPF0053 family. Hemolysin C subfamily.

This chain is Possible hemolysin C (tlyC), found in Rickettsia bellii (strain RML369-C).